The chain runs to 565 residues: Glycine/sarcosine/dimethylglycine N-methyltransferase (565 aa).

The span at 1-10 shows a compositional bias: basic and acidic residues; that stretch reads MTKSVDDLAR. A disordered region spans residues 1-34; sequence MTKSVDDLARGDQAGDEQDPVHREQQTFGDNPLE. Residues Tyr-45, Trp-53, Arg-62, Ala-86, Asp-107, 134–135, and Leu-152 each bind S-adenosyl-L-methionine; that span reads DW. Substrate is bound by residues Asn-154, Arg-187, and Tyr-226.

It belongs to the class I-like SAM-binding methyltransferase superfamily. Glycine N-methyltransferase family. In terms of assembly, monomer.

The enzyme catalyses glycine + 2 S-adenosyl-L-methionine = N,N-dimethylglycine + 2 S-adenosyl-L-homocysteine + 2 H(+). It catalyses the reaction sarcosine + 2 S-adenosyl-L-methionine = glycine betaine + 2 S-adenosyl-L-homocysteine + 2 H(+). It carries out the reaction glycine + S-adenosyl-L-methionine = sarcosine + S-adenosyl-L-homocysteine + H(+). The catalysed reaction is sarcosine + S-adenosyl-L-methionine = N,N-dimethylglycine + S-adenosyl-L-homocysteine + H(+). The enzyme catalyses N,N-dimethylglycine + S-adenosyl-L-methionine = glycine betaine + S-adenosyl-L-homocysteine + H(+). Its pathway is amine and polyamine biosynthesis; betaine biosynthesis via glycine pathway; betaine from glycine: step 1/3. It functions in the pathway amine and polyamine biosynthesis; betaine biosynthesis via glycine pathway; betaine from glycine: step 2/3. The protein operates within amine and polyamine biosynthesis; betaine biosynthesis via glycine pathway; betaine from glycine: step 3/3. Functionally, catalyzes the methylation of glycine, sarcosine and dimethylglycine to sarcosine, dimethylglycine and betaine, respectively, with S-adenosylmethionine (AdoMet) acting as the methyl donor. Shows low level of activity on glycine when expressed in E.coli. This is Glycine/sarcosine/dimethylglycine N-methyltransferase from Actinopolyspora halophila.